Consider the following 380-residue polypeptide: Cytochrome b (380 aa).

A run of 4 helical transmembrane segments spans residues 34–54, 78–99, 114–134, and 179–199; these read FGWLLGVCVIVQIATGLFLAM, WLLRNLHANGASFFFICIYFHI, WNIGVILLFLVMATAFVGYVL, and FFTFHFILPFIIAAMSMIHLL. H84 and H98 together coordinate heme b. Heme b contacts are provided by H183 and H197. H202 lines the a ubiquinone pocket. 4 consecutive transmembrane segments (helical) span residues 227–247, 289–309, 321–341, and 348–368; these read FKDLLGFIILLGALAILSTFA, LGGVLALLLSIMVLFLMPIIH, AAKAFFWALIANTIILTWIGG, and FISIGQIASGLYFLIFVLIIP.

This sequence belongs to the cytochrome b family. In terms of assembly, the cytochrome bc1 complex contains 3 respiratory subunits (MT-CYB, CYC1 and UQCRFS1), 2 core proteins (UQCRC1 and UQCRC2) and probably 6 low-molecular weight proteins. Heme b serves as cofactor.

The protein localises to the mitochondrion inner membrane. Functionally, component of the ubiquinol-cytochrome c reductase complex (complex III or cytochrome b-c1 complex) that is part of the mitochondrial respiratory chain. The b-c1 complex mediates electron transfer from ubiquinol to cytochrome c. Contributes to the generation of a proton gradient across the mitochondrial membrane that is then used for ATP synthesis. This Rana dybowskii (Dybovsky's frog) protein is Cytochrome b (mt-cyb).